The following is a 316-amino-acid chain: MFKFDKKQEVFELGGVKFGGQPGENPTVLVSTMFYARHKIVTDEDKGIFDRAAAETLWNTQVSLSDATGLPYVNQIVGETPESIKRYIEWFVGIDDRTPFLIDSSAGNVRAAAAQYCTEIGVADRAIHNSINASIEQSEIDVLTESDVSAAIVLAFNATDPTVKGKIDILEVGGSGQTKGMLQVAKECGIKYPIIDVAAMPLGAGSGATIRSVPTLKGKFGLPIGGGYHNMASAWDWLRKFKKTQPDPKAIYMPTDIGTNLVAQIAGSDYLLYGPIENVNQIFPAVAMVDIMLGETAKELGVEIADLENHPVTKLT.

This sequence belongs to the MtrH family. In terms of assembly, the complex is composed of 8 subunits; MtrA, MtrB, MtrC, MtrD, MtrE, MtrF, MtrG and MtrH.

It carries out the reaction 5-methyl-5,6,7,8-tetrahydromethanopterin + coenzyme M + 2 Na(+)(in) = 5,6,7,8-tetrahydromethanopterin + methyl-coenzyme M + 2 Na(+)(out). The protein operates within one-carbon metabolism; methanogenesis from CO(2); methyl-coenzyme M from 5,10-methylene-5,6,7,8-tetrahydromethanopterin: step 2/2. Functionally, part of a complex that catalyzes the formation of methyl-coenzyme M and tetrahydromethanopterin from coenzyme M and methyl-tetrahydromethanopterin. This is an energy-conserving, sodium-ion translocating step. MtrH catalyzes the transfer of the methyl group from methyl-tetrahydromethanopterin to the corrinoid prosthetic group of MtrA. The protein is Tetrahydromethanopterin S-methyltransferase subunit H (mtrH) of Methanosarcina mazei (strain ATCC BAA-159 / DSM 3647 / Goe1 / Go1 / JCM 11833 / OCM 88) (Methanosarcina frisia).